The primary structure comprises 461 residues: tRNA modification GTPase MnmE (461 aa).

Arg23, Glu84, and Arg123 together coordinate (6S)-5-formyl-5,6,7,8-tetrahydrofolate. The TrmE-type G domain occupies 216 to 383 (GARAALIGRP…LGATVARLLL (168 aa)). K(+) is bound at residue Asn226. GTP is bound by residues 226–231 (NAGKSS), 245–251 (TPIPGTT), and 270–273 (DTAG). Residue Ser230 participates in Mg(2+) binding. K(+) is bound by residues Thr245, Ile247, and Thr250. Thr251 provides a ligand contact to Mg(2+). Position 461 (Lys461) interacts with (6S)-5-formyl-5,6,7,8-tetrahydrofolate.

The protein belongs to the TRAFAC class TrmE-Era-EngA-EngB-Septin-like GTPase superfamily. TrmE GTPase family. As to quaternary structure, homodimer. Heterotetramer of two MnmE and two MnmG subunits. The cofactor is K(+).

The protein resides in the cytoplasm. In terms of biological role, exhibits a very high intrinsic GTPase hydrolysis rate. Involved in the addition of a carboxymethylaminomethyl (cmnm) group at the wobble position (U34) of certain tRNAs, forming tRNA-cmnm(5)s(2)U34. This Roseiflexus sp. (strain RS-1) protein is tRNA modification GTPase MnmE.